Reading from the N-terminus, the 553-residue chain is MAPPTAVGSSINFEGHPTIKSTQDPLVQKLSLNTDTVIRHNAPPPTLYEDGLLEKGTTISSTGALMAYSGNKTGRSPKDKRIVDESTSSHNIWWGPVNKQVGELTWEISRSRALDYLRTREKLFVVDAYAGWDPSYRIKVRIICARAYHALFMTNMLIRPTEEELKNFGEPDFTIYNAGQFPANIHTKGMTSATSVEINFKDMEMVILGTEYAGEMKKGIFTVMFYLMPIKHKVLTLHSSCNQGVEKGDVTLFFGLSGTGKTTLSADPQRKLIGDDEHCWSDNGVFNIEGGCYAKCLDLSAEKEPEIFNSIKFGAILENVVYXXITKVVDYGDSSITENTRCAYPIDFIPSAKIPCLPTPIPQYYLLTCDASGVLATVSKLTNAQVMYHFISGYTSKMAGSEEGVTEPHATFSACFGQPFLVLHPMKYAQQLADKISEHNANAWLLNTGWVGSSVAQGGGKRCPLKYTRAILDAIHSGELSKVEYEKVPVFNLNVPTSCPGVPSEILNPTKAWTQGTDSFNKEIKSLATKFAENFKTYADQATAEVKAAGPEA.

A disordered region spans residues 1–22 (MAPPTAVGSSINFEGHPTIKST). 255–262 (GLSGTGKT) contacts ATP.

It belongs to the phosphoenolpyruvate carboxykinase (ATP) family.

It catalyses the reaction oxaloacetate + ATP = phosphoenolpyruvate + ADP + CO2. The protein operates within carbohydrate biosynthesis; gluconeogenesis. This is Phosphoenolpyruvate carboxykinase (ATP) (PCK1) from Candida albicans (Yeast).